The primary structure comprises 923 residues: Probable dipeptidyl-aminopeptidase B (923 aa).

Positions 1 to 16 (MATEKGHGRDDEERVP) are enriched in basic and acidic residues. The disordered stretch occupies residues 1–21 (MATEKGHGRDDEERVPLTRGS). Topologically, residues 1 to 99 (MATEKGHGRD…KPMHKSVKIA (99 aa)) are cytoplasmic. The chain crosses the membrane as a helical; Signal-anchor for type II membrane protein span at residues 100–120 (LWTLLFLSLGGWSLAFVLFIF). At 121-923 (RSHDTYETPI…GLSYNFKHLH (803 aa)) the chain is on the vacuolar side. N-linked (GlcNAc...) asparagine glycans are attached at residues asparagine 135, asparagine 351, and asparagine 574. The active-site Charge relay system is serine 756. A glycan (N-linked (GlcNAc...) asparagine) is linked at asparagine 815. Active-site charge relay system residues include aspartate 833 and histidine 866. A glycan (N-linked (GlcNAc...) asparagine) is linked at asparagine 902.

The protein belongs to the peptidase S9B family.

The protein localises to the vacuole membrane. It carries out the reaction Release of an N-terminal dipeptide, Xaa-Yaa-|-Zaa-, from a polypeptide, preferentially when Yaa is Pro, provided Zaa is neither Pro nor hydroxyproline.. Functionally, type IV dipeptidyl-peptidase which removes N-terminal dipeptides sequentially from polypeptides having unsubstituted N-termini provided that the penultimate residue is proline. In Ajellomyces capsulatus (strain G186AR / H82 / ATCC MYA-2454 / RMSCC 2432) (Darling's disease fungus), this protein is Probable dipeptidyl-aminopeptidase B (DAPB).